Consider the following 237-residue polypeptide: Ribonuclease PH (237 aa).

Phosphate is bound by residues Arg86 and 124 to 126 (GTR).

Belongs to the RNase PH family. In terms of assembly, homohexameric ring arranged as a trimer of dimers.

It carries out the reaction tRNA(n+1) + phosphate = tRNA(n) + a ribonucleoside 5'-diphosphate. In terms of biological role, phosphorolytic 3'-5' exoribonuclease that plays an important role in tRNA 3'-end maturation. Removes nucleotide residues following the 3'-CCA terminus of tRNAs; can also add nucleotides to the ends of RNA molecules by using nucleoside diphosphates as substrates, but this may not be physiologically important. Probably plays a role in initiation of 16S rRNA degradation (leading to ribosome degradation) during starvation. This chain is Ribonuclease PH, found in Methylorubrum extorquens (strain PA1) (Methylobacterium extorquens).